Reading from the N-terminus, the 650-residue chain is DNA ligase (650 aa).

NAD(+) contacts are provided by residues Asp30–Asp34 and Ser79–Leu80. Residue Lys110 is the N6-AMP-lysine intermediate of the active site. Positions 131, 165, and 304 each coordinate NAD(+). Zn(2+) is bound by residues Cys398, Cys401, Cys414, and Cys419. A BRCT domain is found at Asp573–Lys650.

Belongs to the NAD-dependent DNA ligase family. LigA subfamily. Mg(2+) serves as cofactor. The cofactor is Mn(2+).

It carries out the reaction NAD(+) + (deoxyribonucleotide)n-3'-hydroxyl + 5'-phospho-(deoxyribonucleotide)m = (deoxyribonucleotide)n+m + AMP + beta-nicotinamide D-nucleotide.. Its function is as follows. DNA ligase that catalyzes the formation of phosphodiester linkages between 5'-phosphoryl and 3'-hydroxyl groups in double-stranded DNA using NAD as a coenzyme and as the energy source for the reaction. It is essential for DNA replication and repair of damaged DNA. The chain is DNA ligase from Helicobacter hepaticus (strain ATCC 51449 / 3B1).